Consider the following 440-residue polypeptide: Glutamyl-tRNA reductase (440 aa).

Substrate-binding positions include 47-50 (TCNR), Ser110, 115-117 (ERE), and Gln121. Cys48 acts as the Nucleophile in catalysis. 192–197 (GTGAYA) serves as a coordination point for NADP(+).

Belongs to the glutamyl-tRNA reductase family. In terms of assembly, homodimer.

The catalysed reaction is (S)-4-amino-5-oxopentanoate + tRNA(Glu) + NADP(+) = L-glutamyl-tRNA(Glu) + NADPH + H(+). The protein operates within porphyrin-containing compound metabolism; protoporphyrin-IX biosynthesis; 5-aminolevulinate from L-glutamyl-tRNA(Glu): step 1/2. In terms of biological role, catalyzes the NADPH-dependent reduction of glutamyl-tRNA(Glu) to glutamate 1-semialdehyde (GSA). This is Glutamyl-tRNA reductase from Paenarthrobacter aurescens (strain TC1).